The following is a 488-amino-acid chain: 3-octaprenyl-4-hydroxybenzoate carboxy-lyase (488 aa).

N172 is a binding site for Mn(2+). Prenylated FMN is bound by residues 175-177 (IYR), 189-191 (RWL), and 194-195 (RG). E238 contributes to the Mn(2+) binding site. Residue D287 is the Proton donor of the active site.

Belongs to the UbiD family. In terms of assembly, homohexamer. Requires prenylated FMN as cofactor. The cofactor is Mn(2+).

The protein resides in the cell membrane. The catalysed reaction is a 4-hydroxy-3-(all-trans-polyprenyl)benzoate + H(+) = a 2-(all-trans-polyprenyl)phenol + CO2. The protein operates within cofactor biosynthesis; ubiquinone biosynthesis. Functionally, catalyzes the decarboxylation of 3-octaprenyl-4-hydroxy benzoate to 2-octaprenylphenol, an intermediate step in ubiquinone biosynthesis. This is 3-octaprenyl-4-hydroxybenzoate carboxy-lyase from Legionella pneumophila (strain Lens).